A 245-amino-acid chain; its full sequence is Thiopurine S-methyltransferase (245 aa).

Position 29–40 (29–40 (WQEKWVSRRIGF)) interacts with S-adenosyl-L-methionine. Phe40 serves as a coordination point for substrate. Lys58 is subject to N6-acetyllysine. Residues Leu69, Glu90, and Arg152 each contribute to the S-adenosyl-L-methionine site.

Belongs to the class I-like SAM-binding methyltransferase superfamily. TPMT family. As to quaternary structure, monomer.

The protein localises to the cytoplasm. It carries out the reaction S-adenosyl-L-methionine + a thiopurine = S-adenosyl-L-homocysteine + a thiopurine S-methylether.. This Canis lupus familiaris (Dog) protein is Thiopurine S-methyltransferase (TPMT).